The primary structure comprises 793 residues: Methionine--tRNA ligase (793 aa).

Positions Pro-11–Asn-21 match the 'HIGH' region motif. Cys-142, Cys-145, Cys-155, and Cys-158 together coordinate Zn(2+). The 'KMSKS' region signature appears at Lys-334–Ser-338. Lys-337 contacts ATP. A compositionally biased stretch (basic and acidic residues) spans Ser-581–Lys-590. The tract at residues Ser-581 to Ala-610 is disordered. Residues Gly-591–Ala-610 are compositionally biased toward low complexity. In terms of domain architecture, tRNA-binding spans Phe-622 to Ile-727.

Belongs to the class-I aminoacyl-tRNA synthetase family. MetG type 1 subfamily. As to quaternary structure, homodimer. Zn(2+) is required as a cofactor.

It is found in the cytoplasm. It carries out the reaction tRNA(Met) + L-methionine + ATP = L-methionyl-tRNA(Met) + AMP + diphosphate. Is required not only for elongation of protein synthesis but also for the initiation of all mRNA translation through initiator tRNA(fMet) aminoacylation. The polypeptide is Methionine--tRNA ligase (Treponema denticola (strain ATCC 35405 / DSM 14222 / CIP 103919 / JCM 8153 / KCTC 15104)).